The following is a 205-amino-acid chain: Small ribosomal subunit protein uS4c (205 aa).

The segment at 16–40 is disordered; sequence GKLPSLTNKTSKKRKSPGQPATSFK. Residues 93–161 enclose the S4 RNA-binding domain; it reads MRLDNIVHRI…IQKNIESKEL (69 aa).

The protein belongs to the universal ribosomal protein uS4 family. Part of the 30S ribosomal subunit. Contacts protein S5. The interaction surface between S4 and S5 is involved in control of translational fidelity.

It localises to the plastid. Its subcellular location is the chloroplast. In terms of biological role, one of the primary rRNA binding proteins, it binds directly to 16S rRNA where it nucleates assembly of the body of the 30S subunit. With S5 and S12 plays an important role in translational accuracy. The sequence is that of Small ribosomal subunit protein uS4c (rps4) from Euglena gracilis.